The following is a 328-amino-acid chain: uncharacterized protein (328 aa).

The G-patch domain maps to 10 to 55; that stretch reads KMGFGHAMLLKMGWKGKGLGVEEDGRTEIIVNKKKQDKVGVGASIS. Positions 97–291 are disordered; it reads EKITFKRTIK…KKSFSVSKTR (195 aa). Residues 101-110 are compositionally biased toward basic residues; sequence FKRTIKKNSK. Residues 116 to 126 are compositionally biased toward acidic residues; sequence SDSDSDSDSES. Low complexity-rich tracts occupy residues 141-158 and 210-240; these read DSDS…SSSS and SSSS…SSSE. Residues 248 to 257 are compositionally biased toward basic residues; that stretch reads KNKNKNKNKK.

This is an uncharacterized protein from Dictyostelium discoideum (Social amoeba).